We begin with the raw amino-acid sequence, 101 residues long: Small ribosomal subunit protein uS14 (101 aa).

This sequence belongs to the universal ribosomal protein uS14 family. As to quaternary structure, part of the 30S ribosomal subunit. Contacts proteins S3 and S10.

Its function is as follows. Binds 16S rRNA, required for the assembly of 30S particles and may also be responsible for determining the conformation of the 16S rRNA at the A site. This chain is Small ribosomal subunit protein uS14, found in Leifsonia xyli subsp. xyli (strain CTCB07).